We begin with the raw amino-acid sequence, 231 residues long: MNRFICVLALSGSAVLAGCVAPPPKPNDPYYAPVLPRTPLPSASNNGSIYQAGFEQNLYSDRKAFRVGDIITITLNERTNASKGANSALTKTSSNSIGLTSLFGAVPNTNNPLGDGDLTLNAGYSGNRATKGDSKAAQSNSLTGSITVTVADVLPNGIIAVRGEKWMTLNTGDELVRIAGLVRADDIATDNTVSSTRVADARITYSGTGSFADANQPGWFDRFFLSPLFPF.

Residues Met-1–Gly-18 form the signal peptide. Cys-19 carries N-palmitoyl cysteine lipidation. Cys-19 carries S-diacylglycerol cysteine lipidation.

The protein belongs to the FlgH family. In terms of assembly, the basal body constitutes a major portion of the flagellar organelle and consists of four rings (L,P,S, and M) mounted on a central rod.

It localises to the cell outer membrane. The protein localises to the bacterial flagellum basal body. Assembles around the rod to form the L-ring and probably protects the motor/basal body from shearing forces during rotation. In Pseudomonas fluorescens (strain ATCC BAA-477 / NRRL B-23932 / Pf-5), this protein is Flagellar L-ring protein.